The primary structure comprises 398 residues: MSISIAAIILAAGRGERAGSPHKIPKQYRLLGKKPIIYHTVCRFLRHPAITTIILVIHPEDRQICEQALAEFKERFIIVEGGSTRQISTLHGLQALKKFNPQYVHIHDGARPFIENELLDNIHNTLTPQEGVLPVLPISDTLKRVNHQYVLETIPRTHLYSAQTPQCFPFEPILAAHKQAKRVCKEDFTDDCAIAEWFGLPMRTIPGDPHNIKITWHKDFDTAHLYLQKKMQMFPDIRVGNGYDVHSFEEGDFLILCGIRIPFHKKLNGHSDADVALHALTDALLATRGAGDIGTHFPPSDPQWKNVSSEIFLRHALSLLKQAGGRIANVDITVIAENPKIGPYRHAMIENLMTILAITPDRISIKATTNERLGFIGRGEGIAALATASVLYPGEIPQ.

Positions 1-237 (MSISIAAIIL…QKKMQMFPDI (237 aa)) are 2-C-methyl-D-erythritol 4-phosphate cytidylyltransferase. The segment at 238-398 (RVGNGYDVHS…SVLYPGEIPQ (161 aa)) is 2-C-methyl-D-erythritol 2,4-cyclodiphosphate synthase. Residues D244 and H246 each contribute to the a divalent metal cation site. Residues 244-246 (DVH) and 270-271 (HS) contribute to the 4-CDP-2-C-methyl-D-erythritol 2-phosphate site. Residue H278 coordinates a divalent metal cation. 4-CDP-2-C-methyl-D-erythritol 2-phosphate contacts are provided by residues 292–294 (DIG), 368–371 (TTNE), F375, and R378.

This sequence in the N-terminal section; belongs to the IspD/TarI cytidylyltransferase family. IspD subfamily. The protein in the C-terminal section; belongs to the IspF family. It depends on a divalent metal cation as a cofactor.

It carries out the reaction 2-C-methyl-D-erythritol 4-phosphate + CTP + H(+) = 4-CDP-2-C-methyl-D-erythritol + diphosphate. It catalyses the reaction 4-CDP-2-C-methyl-D-erythritol 2-phosphate = 2-C-methyl-D-erythritol 2,4-cyclic diphosphate + CMP. Its pathway is isoprenoid biosynthesis; isopentenyl diphosphate biosynthesis via DXP pathway; isopentenyl diphosphate from 1-deoxy-D-xylulose 5-phosphate: step 2/6. It participates in isoprenoid biosynthesis; isopentenyl diphosphate biosynthesis via DXP pathway; isopentenyl diphosphate from 1-deoxy-D-xylulose 5-phosphate: step 4/6. Bifunctional enzyme that catalyzes the formation of 4-diphosphocytidyl-2-C-methyl-D-erythritol from CTP and 2-C-methyl-D-erythritol 4-phosphate (MEP) (IspD), and catalyzes the conversion of 4-diphosphocytidyl-2-C-methyl-D-erythritol 2-phosphate (CDP-ME2P) to 2-C-methyl-D-erythritol 2,4-cyclodiphosphate (ME-CPP) with a corresponding release of cytidine 5-monophosphate (CMP) (IspF). In Bartonella tribocorum (strain CIP 105476 / IBS 506), this protein is Bifunctional enzyme IspD/IspF.